The chain runs to 416 residues: N-acetylmuramoyl-L-alanine amidase AmiC (416 aa).

An N-terminal signal peptide occupies residues 1–26 (MIKLTRRQIIRRTAGTLFALSPIASA). Positions 166 to 191 (RGSPEADLAQNTTPQPGRGRNGRRPV) are disordered. The region spanning 192-405 (IMLDPGHGGE…CAQSIASGVQ (214 aa)) is the MurNAc-LAA domain.

It belongs to the N-acetylmuramoyl-L-alanine amidase 3 family.

Its subcellular location is the periplasm. It carries out the reaction Hydrolyzes the link between N-acetylmuramoyl residues and L-amino acid residues in certain cell-wall glycopeptides.. Cell-wall hydrolase involved in septum cleavage during cell division. In Neisseria meningitidis serogroup B (strain ATCC BAA-335 / MC58), this protein is N-acetylmuramoyl-L-alanine amidase AmiC (amiC).